The sequence spans 212 residues: Uracil phosphoribosyltransferase (212 aa).

Residues Arg-78, Arg-103, and 130–138 contribute to the 5-phospho-alpha-D-ribose 1-diphosphate site; that span reads DPMLATGGS. Uracil contacts are provided by residues Ile-193 and 198 to 200; that span reads GDA. Asp-199 serves as a coordination point for 5-phospho-alpha-D-ribose 1-diphosphate.

It belongs to the UPRTase family. Mg(2+) serves as cofactor.

The enzyme catalyses UMP + diphosphate = 5-phospho-alpha-D-ribose 1-diphosphate + uracil. It functions in the pathway pyrimidine metabolism; UMP biosynthesis via salvage pathway; UMP from uracil: step 1/1. Allosterically activated by GTP. In terms of biological role, catalyzes the conversion of uracil and 5-phospho-alpha-D-ribose 1-diphosphate (PRPP) to UMP and diphosphate. In Bordetella petrii (strain ATCC BAA-461 / DSM 12804 / CCUG 43448), this protein is Uracil phosphoribosyltransferase.